The sequence spans 323 residues: tRNA U34 carboxymethyltransferase (323 aa).

Residues Lys-91, Trp-105, Lys-110, Gly-130, 152–154 (DPS), 181–182 (IE), Met-196, Tyr-200, and Arg-315 each bind carboxy-S-adenosyl-L-methionine.

It belongs to the class I-like SAM-binding methyltransferase superfamily. CmoB family. Homotetramer.

The catalysed reaction is carboxy-S-adenosyl-L-methionine + 5-hydroxyuridine(34) in tRNA = 5-carboxymethoxyuridine(34) in tRNA + S-adenosyl-L-homocysteine + H(+). Functionally, catalyzes carboxymethyl transfer from carboxy-S-adenosyl-L-methionine (Cx-SAM) to 5-hydroxyuridine (ho5U) to form 5-carboxymethoxyuridine (cmo5U) at position 34 in tRNAs. This is tRNA U34 carboxymethyltransferase from Vibrio campbellii (strain ATCC BAA-1116).